Consider the following 342-residue polypeptide: tRNA N6-adenosine threonylcarbamoyltransferase (342 aa).

Fe cation contacts are provided by His112 and His116. Substrate-binding positions include 134–138, Asp167, Gly180, and Asn280; that span reads LASGG. Position 308 (Asp308) interacts with Fe cation.

Belongs to the KAE1 / TsaD family. Fe(2+) is required as a cofactor.

Its subcellular location is the cytoplasm. The catalysed reaction is L-threonylcarbamoyladenylate + adenosine(37) in tRNA = N(6)-L-threonylcarbamoyladenosine(37) in tRNA + AMP + H(+). In terms of biological role, required for the formation of a threonylcarbamoyl group on adenosine at position 37 (t(6)A37) in tRNAs that read codons beginning with adenine. Is involved in the transfer of the threonylcarbamoyl moiety of threonylcarbamoyl-AMP (TC-AMP) to the N6 group of A37, together with TsaE and TsaB. TsaD likely plays a direct catalytic role in this reaction. The chain is tRNA N6-adenosine threonylcarbamoyltransferase from Rickettsia canadensis (strain McKiel).